We begin with the raw amino-acid sequence, 315 residues long: Mitochondrial outer membrane import complex protein METAXIN (315 aa).

N-acetylmethionine is present on Met-1. The stretch at 157-181 (ENAEQREKQIYKRASEAYEALSTRL) forms a coiled coil. A helical transmembrane segment spans residues 195 to 215 (LDAFLLSHILFIIQALPVTSV). The segment at 240–277 (ASSSSPSPPLHSFPSSFPRKSSKPKSKPKVEKTEEEKK) is disordered. Over residues 267–277 (PKVEKTEEEKK) the composition is skewed to basic and acidic residues. The helical transmembrane segment at 284 to 304 (FFLAAQFLAVVIYVSVMGGGS) threads the bilayer.

Belongs to the metaxin family. Part of a high molecular weight complex that is distinct from the TOM complex. Interacts with a variety of mitochondrial precursor proteins. In terms of tissue distribution, expressed in roots, young cotyledons, flowers and leaves.

It is found in the mitochondrion inner membrane. The protein localises to the mitochondrion outer membrane. In terms of biological role, involved in transport of proteins into the mitochondrion. The protein is Mitochondrial outer membrane import complex protein METAXIN (MTX1) of Arabidopsis thaliana (Mouse-ear cress).